Consider the following 250-residue polypeptide: Uracil-DNA glycosylase (250 aa).

Catalysis depends on Asp78, which acts as the Proton acceptor. The tract at residues 228–250 is disordered; it reads RGQKPVDWSGEQNNASRQGKFAL.

The protein belongs to the uracil-DNA glycosylase (UDG) superfamily. UNG family.

Its subcellular location is the cytoplasm. The catalysed reaction is Hydrolyzes single-stranded DNA or mismatched double-stranded DNA and polynucleotides, releasing free uracil.. Functionally, excises uracil residues from the DNA which can arise as a result of misincorporation of dUMP residues by DNA polymerase or due to deamination of cytosine. The polypeptide is Uracil-DNA glycosylase (Bordetella bronchiseptica (strain ATCC BAA-588 / NCTC 13252 / RB50) (Alcaligenes bronchisepticus)).